The following is a 200-amino-acid chain: MTNELINGVALADTPEKLVKAVQELALAKDVAAIPTLIAVFGYNNPTAAAIASTALVQLGEVAVPQLLTQIDDYNYGARAYSIRTLAAIADPRALDVLIDAAATDFAPSVRRAAAKGLGNLHWHKLEFPDNQTAPKKALETLLFISQDAEWSIRYAAIVGLQGLVNIPDLQQPIHTRLKEMLASDAEKAVRARILLAQSQ.

The protein belongs to the CpcE/RpcE/PecE family. CpcE and CpcF associate to form a lyase.

Functionally, required for the chromophorylation of the CpcA gene product. This Nostoc sp. (strain PCC 7120 / SAG 25.82 / UTEX 2576) protein is Phycocyanobilin lyase subunit beta (cpcF).